The following is a 358-amino-acid chain: MVNTLEKPGFDEIRPGVKTPAKETILTPRFYTTDFDEMAKMDISPNEDELRAILEEFRVDYNRHHFVRNESFNKSWDHIDGEKRQLFVEFLERSCTAEFSGFLLYKELGRRLKNKNPLLAECFNLMSRDEARHAGFLNKAMSDFNLSLDLGFLTKSRKYTFFKPKFIFYATYLSEKIGYWRYITIYRHLEKNPNDCIYPIFEFFENWCQDENRHGDFFDAIMRAQPHTLNDWKAKLWCRFFLLSVFATMYLNDTQRADFYACLGLEARSYDKEVIEKTNETAGRVFPIILDVNNPEFYNRLETCVSNNEQLRAIDASGAPGVIKALRKLPIFASNGWQFIKLYLMKPIAVDQLAGAVR.

It belongs to the AcsF family. It depends on Fe cation as a cofactor.

The enzyme catalyses Mg-protoporphyrin IX 13-monomethyl ester + 3 NADPH + 3 O2 + 2 H(+) = 3,8-divinyl protochlorophyllide a + 3 NADP(+) + 5 H2O. The protein operates within porphyrin-containing compound metabolism; chlorophyll biosynthesis (light-independent). Functionally, catalyzes the formation of the isocyclic ring in chlorophyll biosynthesis. Mediates the cyclase reaction, which results in the formation of divinylprotochlorophyllide (Pchlide) characteristic of all chlorophylls from magnesium-protoporphyrin IX 13-monomethyl ester (MgPMME). The sequence is that of Magnesium-protoporphyrin IX monomethyl ester [oxidative] cyclase 1 from Synechocystis sp. (strain ATCC 27184 / PCC 6803 / Kazusa).